The following is a 246-amino-acid chain: Phosphatidylserine decarboxylase proenzyme (246 aa).

Ser-204 serves as the catalytic Schiff-base intermediate with substrate; via pyruvic acid. Ser-204 is modified (pyruvic acid (Ser); by autocatalysis).

This sequence belongs to the phosphatidylserine decarboxylase family. PSD-A subfamily. In terms of assembly, heterodimer of a large membrane-associated beta subunit and a small pyruvoyl-containing alpha subunit. Pyruvate serves as cofactor. In terms of processing, is synthesized initially as an inactive proenzyme. Formation of the active enzyme involves a self-maturation process in which the active site pyruvoyl group is generated from an internal serine residue via an autocatalytic post-translational modification. Two non-identical subunits are generated from the proenzyme in this reaction, and the pyruvate is formed at the N-terminus of the alpha chain, which is derived from the carboxyl end of the proenzyme. The post-translation cleavage follows an unusual pathway, termed non-hydrolytic serinolysis, in which the side chain hydroxyl group of the serine supplies its oxygen atom to form the C-terminus of the beta chain, while the remainder of the serine residue undergoes an oxidative deamination to produce ammonia and the pyruvoyl prosthetic group on the alpha chain.

It localises to the cell membrane. It carries out the reaction a 1,2-diacyl-sn-glycero-3-phospho-L-serine + H(+) = a 1,2-diacyl-sn-glycero-3-phosphoethanolamine + CO2. Its pathway is phospholipid metabolism; phosphatidylethanolamine biosynthesis; phosphatidylethanolamine from CDP-diacylglycerol: step 2/2. Functionally, catalyzes the formation of phosphatidylethanolamine (PtdEtn) from phosphatidylserine (PtdSer). This Zymomonas mobilis subsp. mobilis (strain ATCC 31821 / ZM4 / CP4) protein is Phosphatidylserine decarboxylase proenzyme.